The following is a 316-amino-acid chain: Cation efflux system protein CzcD (316 aa).

6 helical membrane passes run 17–37 (LKIA…GGVM), 47–67 (AAHM…IAIA), 82–102 (FEIL…IYIL), 115–135 (IEST…LISM), 152–172 (YLEV…AIII), and 174–194 (FTGW…WVLP).

The protein belongs to the cation diffusion facilitator (CDF) transporter (TC 2.A.4) family. SLC30A subfamily.

It is found in the cell membrane. Its function is as follows. Necessary for activation of the czc determinant. This chain is Cation efflux system protein CzcD (czcD), found in Alcaligenes sp. (strain CT14).